Consider the following 498-residue polypeptide: Putative phosphotransferase 057R (498 aa).

In Dryophytes versicolor (chameleon treefrog), this protein is Putative phosphotransferase 057R.